The chain runs to 223 residues: Deoxyribose-phosphate aldolase (223 aa).

Catalysis depends on Asp-91, which acts as the Proton donor/acceptor. Lys-153 acts as the Schiff-base intermediate with acetaldehyde in catalysis. The active-site Proton donor/acceptor is the Lys-182.

Belongs to the DeoC/FbaB aldolase family. DeoC type 1 subfamily.

Its subcellular location is the cytoplasm. It carries out the reaction 2-deoxy-D-ribose 5-phosphate = D-glyceraldehyde 3-phosphate + acetaldehyde. It participates in carbohydrate degradation; 2-deoxy-D-ribose 1-phosphate degradation; D-glyceraldehyde 3-phosphate and acetaldehyde from 2-deoxy-alpha-D-ribose 1-phosphate: step 2/2. Its function is as follows. Catalyzes a reversible aldol reaction between acetaldehyde and D-glyceraldehyde 3-phosphate to generate 2-deoxy-D-ribose 5-phosphate. This chain is Deoxyribose-phosphate aldolase, found in Streptococcus pyogenes serotype M1.